Here is a 143-residue protein sequence, read N- to C-terminus: Large ribosomal subunit protein uL16 (143 aa).

Belongs to the universal ribosomal protein uL16 family. In terms of assembly, part of the 50S ribosomal subunit.

In terms of biological role, binds 23S rRNA and is also seen to make contacts with the A and possibly P site tRNAs. The sequence is that of Large ribosomal subunit protein uL16 from Sphingopyxis alaskensis (strain DSM 13593 / LMG 18877 / RB2256) (Sphingomonas alaskensis).